The sequence spans 630 residues: tRNA uridine 5-carboxymethylaminomethyl modification enzyme MnmG (630 aa).

13 to 18 serves as a coordination point for FAD; sequence GGGHAG. 273 to 287 is a binding site for NAD(+); it reads GPRYCPSIEDKIHRF.

The protein belongs to the MnmG family. Homodimer. Heterotetramer of two MnmE and two MnmG subunits. FAD is required as a cofactor.

Its subcellular location is the cytoplasm. Its function is as follows. NAD-binding protein involved in the addition of a carboxymethylaminomethyl (cmnm) group at the wobble position (U34) of certain tRNAs, forming tRNA-cmnm(5)s(2)U34. The chain is tRNA uridine 5-carboxymethylaminomethyl modification enzyme MnmG from Pseudomonas putida (Arthrobacter siderocapsulatus).